A 152-amino-acid polypeptide reads, in one-letter code: UPF0178 protein YaiI (152 aa).

This sequence belongs to the UPF0178 family.

The sequence is that of UPF0178 protein YaiI from Shigella boydii serotype 18 (strain CDC 3083-94 / BS512).